We begin with the raw amino-acid sequence, 258 residues long: UPF0246 protein Shew_1093 (258 aa).

The protein belongs to the UPF0246 family.

This chain is UPF0246 protein Shew_1093, found in Shewanella loihica (strain ATCC BAA-1088 / PV-4).